A 207-amino-acid polypeptide reads, in one-letter code: Protein GrpE (207 aa).

Residues 1–11 show a composition bias toward basic and acidic residues; sequence MTETDGQKDNN. The segment at 1-40 is disordered; the sequence is MTETDGQKDNNQDTAQAAADPVVSKPYIMPDDPEEGSNEA.

It belongs to the GrpE family. Homodimer.

Its subcellular location is the cytoplasm. In terms of biological role, participates actively in the response to hyperosmotic and heat shock by preventing the aggregation of stress-denatured proteins, in association with DnaK and GrpE. It is the nucleotide exchange factor for DnaK and may function as a thermosensor. Unfolded proteins bind initially to DnaJ; upon interaction with the DnaJ-bound protein, DnaK hydrolyzes its bound ATP, resulting in the formation of a stable complex. GrpE releases ADP from DnaK; ATP binding to DnaK triggers the release of the substrate protein, thus completing the reaction cycle. Several rounds of ATP-dependent interactions between DnaJ, DnaK and GrpE are required for fully efficient folding. The polypeptide is Protein GrpE (Rhodopseudomonas palustris (strain ATCC BAA-98 / CGA009)).